The sequence spans 474 residues: JmjC domain-containing protein F (474 aa).

Residues 247–269 are disordered; that stretch reads KTKKQQQQQQTTTTTANNDNDNS. Low complexity predominate over residues 251–261; that stretch reads QQQQQQTTTTT. The JmjC domain maps to 305–474; that stretch reads AYLAQHGLIE…LSLSFWFIKK (170 aa).

The protein is JmjC domain-containing protein F (jcdF) of Dictyostelium discoideum (Social amoeba).